The chain runs to 499 residues: BTB/POZ domain-containing protein 16 (499 aa).

The BTB domain occupies 143 to 199 (INDPLVTREAFATALKNLYMQEVKICLDDVLGVLAAAHILQFGSLFQRCVTVMMSGL).

The polypeptide is BTB/POZ domain-containing protein 16 (BTBD16) (Bos taurus (Bovine)).